Here is a 585-residue protein sequence, read N- to C-terminus: Parathyroid hormone/parathyroid hormone-related peptide receptor (585 aa).

Residues 1-26 (MGAARIAPGLALLLCCPVLSSAYALV) form the signal peptide. Over 27–184 (DADDVMTKEE…REREVFDRLG (158 aa)) the chain is Extracellular. Intrachain disulfides connect cysteine 48/cysteine 113, cysteine 104/cysteine 144, and cysteine 127/cysteine 166. Residues 66–100 (DKGWASAPTSGKPRKEKASGKLYPESGEDTGSRHQ) form a disordered region. 4 N-linked (GlcNAc...) asparagine glycosylation sites follow: asparagine 147, asparagine 157, asparagine 162, and asparagine 172. Residues 185–208 (MIYTVGYSVSLASLTVAVLILAYF) traverse the membrane as a helical segment. At 209-215 (RRLHCTR) the chain is on the cytoplasmic side. The chain crosses the membrane as a helical span at residues 216–235 (NYIHMHLFLSFMLRAVSIFV). Residues 236–277 (KDAVLYSGATLDEAERLTEEELRAIAQAPLPPVAATSYVGCR) lie on the Extracellular side of the membrane. A helical membrane pass occupies residues 278 to 301 (VAVTFFLYFLATNYYWILVEGLYL). Residues 302–315 (HSLIFMAFFSEKKY) are Cytoplasmic-facing. The chain crosses the membrane as a helical span at residues 316 to 337 (LWGFTVFGWGLPAIFVAVWVSV). Over 338 to 356 (RATLANTGCWDLSSGNKKW) the chain is Extracellular. The chain crosses the membrane as a helical span at residues 357–377 (IIQVPILASIVLNFILFINIV). Topologically, residues 378 to 404 (RVLATKLRETNAGRCDTRQQYRKLLKS) are cytoplasmic. A helical transmembrane segment spans residues 405-423 (TLVLMPLFGVHYIVFMATP). Over 424–435 (YTEVSGTLWQVQ) the chain is Extracellular. Residues 436 to 458 (MHYEMLFNSFQGFFVAIIYCFCN) traverse the membrane as a helical segment. The Cytoplasmic portion of the chain corresponds to 459 to 585 (GEVQAEIKKS…LLQEEWETVM (127 aa)). Positions 469 to 472 (WSRW) match the Important for interaction with G proteins motif. Position 543 is a phosphothreonine (threonine 543).

Belongs to the G-protein coupled receptor 2 family. Homodimer in the absence of bound ligand. Peptide hormone binding leads to dissociation of the homodimer. Post-translationally, N-glycosylated.

It localises to the cell membrane. Its function is as follows. G-protein-coupled receptor for parathyroid hormone (PTH) and for parathyroid hormone-related peptide (PTHLH). Ligand binding causes a conformation change that triggers signaling via guanine nucleotide-binding proteins (G proteins) and modulates the activity of downstream effectors, such as adenylate cyclase (cAMP). PTH1R is coupled to G(s) G alpha proteins and mediates activation of adenylate cyclase activity. PTHLH dissociates from PTH1R more rapidly than PTH; as consequence, the cAMP response induced by PTHLH decays faster than the response induced by PTH. The chain is Parathyroid hormone/parathyroid hormone-related peptide receptor (PTH1R) from Sus scrofa (Pig).